We begin with the raw amino-acid sequence, 940 residues long: Isoleucine--tRNA ligase (940 aa).

The 'HIGH' region signature appears at 58-68; sequence PYANGSIHIGH. Glu-564 serves as a coordination point for L-isoleucyl-5'-AMP. The short motif at 605–609 is the 'KMSKS' region element; the sequence is KMSKS. Position 608 (Lys-608) interacts with ATP. 4 residues coordinate Zn(2+): Cys-903, Cys-906, Cys-923, and Cys-926.

Belongs to the class-I aminoacyl-tRNA synthetase family. IleS type 1 subfamily. Monomer. The cofactor is Zn(2+).

It is found in the cytoplasm. It catalyses the reaction tRNA(Ile) + L-isoleucine + ATP = L-isoleucyl-tRNA(Ile) + AMP + diphosphate. Catalyzes the attachment of isoleucine to tRNA(Ile). As IleRS can inadvertently accommodate and process structurally similar amino acids such as valine, to avoid such errors it has two additional distinct tRNA(Ile)-dependent editing activities. One activity is designated as 'pretransfer' editing and involves the hydrolysis of activated Val-AMP. The other activity is designated 'posttransfer' editing and involves deacylation of mischarged Val-tRNA(Ile). This is Isoleucine--tRNA ligase from Shewanella sp. (strain MR-4).